The following is an 80-amino-acid chain: Protein YibX (80 aa).

This chain is Protein YibX, found in Escherichia coli (strain K12).